The following is a 223-amino-acid chain: Ribonuclease T (223 aa).

An Exonuclease domain is found at 20 to 194 (VVIDVETAGF…YDTEQTALLF (175 aa)). Residues Asp-23, Glu-25, His-181, and Asp-186 each coordinate Mg(2+). The Proton donor/acceptor role is filled by His-181.

The protein belongs to the RNase T family. As to quaternary structure, homodimer. Requires Mg(2+) as cofactor.

Trims short 3' overhangs of a variety of RNA species, leaving a one or two nucleotide 3' overhang. Responsible for the end-turnover of tRNA: specifically removes the terminal AMP residue from uncharged tRNA (tRNA-C-C-A). Also appears to be involved in tRNA biosynthesis. The sequence is that of Ribonuclease T from Cronobacter sakazakii (strain ATCC BAA-894) (Enterobacter sakazakii).